Here is a 360-residue protein sequence, read N- to C-terminus: Peptide chain release factor 1 (360 aa).

N5-methylglutamine is present on glutamine 235. Residues 283–293 (EREAQAKEASA) are compositionally biased toward basic and acidic residues. Positions 283 to 305 (EREAQAKEASARKSLIGSGDRSD) are disordered.

The protein belongs to the prokaryotic/mitochondrial release factor family. Post-translationally, methylated by PrmC. Methylation increases the termination efficiency of RF1.

It is found in the cytoplasm. In terms of biological role, peptide chain release factor 1 directs the termination of translation in response to the peptide chain termination codons UAG and UAA. This chain is Peptide chain release factor 1, found in Ralstonia pickettii (strain 12J).